The chain runs to 438 residues: MNLKKTENALSLTLKNFIKSESFGGIFLFLNAVLAMVVANSFLKESYFALWHTPFGFQIGDFFIGFSLHNWIDDVLMALFFLMIGLEIKRELLFGELSSFKKASFPVIAAIGGMIAPGLIYFFLNANTPSQHGFGIPMATDIAFALGVIMLLGKRVPTALKVFLITLAVADDLGAIVVIALFYTTNLKFAWLLGALGVVLVLAVLNRLNMRSLIPYLLLGVLLWFCVHQSGIHATIAAVILAFMIPVKIPKDSKNVELLELGKRYAETSSGALLSKEQQEILHSIEEKASALQSPLERLEHFLAPISGYFIMPLFAFANAGVSVDSSINLEVDKVLLGVILGLCLGKPLGIFLITFISEKLKITARPKGISWWHILGAGLLAGIGFTMSMFISNLAFTSEHKDAMEVAKIAILLGSLISGIIGALYLFALDKRAALKK.

The next 11 membrane-spanning stretches (helical) occupy residues 23-43 (FGGI…NSFL), 62-82 (FFIG…LFFL), 104-124 (SFPV…YFFL), 133-153 (GFGI…MLLG), 162-182 (VFLI…IALF), 185-205 (TNLK…LAVL), 221-241 (VLLW…AVIL), 302-322 (FLAP…NAGV), 337-357 (LGVI…ITFI), 372-392 (WWHI…SMFI), and 410-430 (IAIL…LFAL).

This sequence belongs to the NhaA Na(+)/H(+) (TC 2.A.33) antiporter family.

The protein localises to the cell inner membrane. The catalysed reaction is Na(+)(in) + 2 H(+)(out) = Na(+)(out) + 2 H(+)(in). In terms of biological role, na(+)/H(+) antiporter that extrudes sodium in exchange for external protons. This is Na(+)/H(+) antiporter NhaA from Helicobacter pylori (strain ATCC 700392 / 26695) (Campylobacter pylori).